The sequence spans 152 residues: Large ribosomal subunit protein uL15 (152 aa).

Positions 18–37 (RVARGIGSGKGKTAGRGVKG) are disordered. Over residues 23–35 (IGSGKGKTAGRGV) the composition is skewed to gly residues.

This sequence belongs to the universal ribosomal protein uL15 family. As to quaternary structure, part of the 50S ribosomal subunit.

In terms of biological role, binds to the 23S rRNA. The protein is Large ribosomal subunit protein uL15 of Rickettsia bellii (strain OSU 85-389).